A 397-amino-acid chain; its full sequence is Acetate kinase 2 (397 aa).

N10 is a binding site for Mg(2+). K17 contacts ATP. Substrate is bound at residue R90. The active-site Proton donor/acceptor is D147. Residues 207-211, 281-283, and 329-333 each bind ATP; these read HLGNG, DCR, and GIGEN. A Mg(2+)-binding site is contributed by E383.

This sequence belongs to the acetokinase family. In terms of assembly, homodimer. Mg(2+) is required as a cofactor. The cofactor is Mn(2+).

Its subcellular location is the cytoplasm. The enzyme catalyses acetate + ATP = acetyl phosphate + ADP. It participates in metabolic intermediate biosynthesis; acetyl-CoA biosynthesis; acetyl-CoA from acetate: step 1/2. Functionally, catalyzes the formation of acetyl phosphate from acetate and ATP. Can also catalyze the reverse reaction. This is Acetate kinase 2 from Photobacterium profundum (strain SS9).